Reading from the N-terminus, the 503-residue chain is Discoidin, CUB and LCCL domain-containing protein 1 (503 aa).

A signal peptide spans methionine 1–alanine 25. The Extracellular segment spans residues glutamate 26 to threonine 250. 4 disulfide bridges follow: cysteine 32–cysteine 59, cysteine 85–cysteine 103, cysteine 149–cysteine 165, and cysteine 169–cysteine 191. The region spanning cysteine 32–serine 141 is the CUB domain. N-linked (GlcNAc...) asparagine glycosylation occurs at asparagine 55. One can recognise an LCCL domain in the interval histidine 143–phenylalanine 239. N-linked (GlcNAc...) asparagine glycosylation is present at asparagine 247. A helical transmembrane segment spans residues valine 251–isoleucine 271. The Cytoplasmic segment spans residues cysteine 272 to leucine 503. Serine 305 carries the phosphoserine modification. Position 406 is a phosphothreonine (threonine 406). The interval glutamine 410 to leucine 503 is disordered. A compositionally biased stretch (polar residues) spans leucine 494–leucine 503.

It localises to the membrane. In Mus musculus (Mouse), this protein is Discoidin, CUB and LCCL domain-containing protein 1 (Dcbld1).